The chain runs to 705 residues: Polyribonucleotide nucleotidyltransferase (705 aa).

2 residues coordinate Mg(2+): aspartate 486 and aspartate 492. The KH domain occupies 553 to 612; the sequence is PRIYTMKINPEKIKDVIGKGGSVIRALTDETGTTIEIEDDGTIKIAATDGDKAKHAIRRI. The region spanning 622 to 690 is the S1 motif domain; sequence GRIYAGKVTR…RQGRIRLSIK (69 aa).

This sequence belongs to the polyribonucleotide nucleotidyltransferase family. Component of the RNA degradosome, which is a multiprotein complex involved in RNA processing and mRNA degradation. Requires Mg(2+) as cofactor.

It localises to the cytoplasm. It catalyses the reaction RNA(n+1) + phosphate = RNA(n) + a ribonucleoside 5'-diphosphate. Its function is as follows. Involved in mRNA degradation. Catalyzes the phosphorolysis of single-stranded polyribonucleotides processively in the 3'- to 5'-direction. The polypeptide is Polyribonucleotide nucleotidyltransferase (Yersinia pseudotuberculosis serotype O:3 (strain YPIII)).